The chain runs to 517 residues: Ribonuclease Y (517 aa).

A helical membrane pass occupies residues 1-21 (MIESLIALIAAIVGLGIGYLV). A KH domain is found at 207–273 (LINVINIKND…TKVIELLVED (67 aa)). One can recognise an HD domain in the interval 333-426 (ALAHSLEVAH…VCAADTLSAA (94 aa)).

The protein belongs to the RNase Y family.

The protein localises to the cell membrane. Functionally, endoribonuclease that initiates mRNA decay. This chain is Ribonuclease Y, found in Campylobacter jejuni subsp. jejuni serotype O:2 (strain ATCC 700819 / NCTC 11168).